A 308-amino-acid polypeptide reads, in one-letter code: Vomeronasal type-1 receptor 92 (308 aa).

The Extracellular portion of the chain corresponds to 1-18; sequence MNKDNTLHTIMKITMFSE. A helical transmembrane segment spans residues 19-39; that stretch reads VSVGISANSILFFAHLCMLLG. Topologically, residues 40–48 are cytoplasmic; it reads ENRPKPFHL. The helical transmembrane segment at 49–69 threads the bilayer; it reads YIVSLSLTQLILLITMGLIAV. The Extracellular segment spans residues 70–91; sequence DMFMSWGRWDSTPCQSLIYLHR. A disulfide bridge connects residues Cys83 and Cys170. The chain crosses the membrane as a helical span at residues 92–112; it reads LLRGFTLCAACLLNVFWMITL. Topologically, residues 113–132 are cytoplasmic; it reads SPRSSCLSKFKHNSPHHISG. Residues 133–153 traverse the membrane as a helical segment; sequence AFLFLCVLYMSFSSHLLVSII. Topologically, residues 154 to 188 are extracellular; it reads ATPNLTSNIFMYVTQSCSLLPMSYSRTSTFSTTIA. Asn157 is a glycosylation site (N-linked (GlcNAc...) asparagine). Residues 189–209 traverse the membrane as a helical segment; sequence IREAFLISLMALSSGFMVTLL. Residues 210–236 are Cytoplasmic-facing; that stretch reads WRHKKQAQHLHSTSLSSKASPERRATR. A helical membrane pass occupies residues 237 to 257; sequence TILLLMSFFVVLYILENVVFY. Residues 258-267 lie on the Extracellular side of the membrane; the sequence is SRMKFKDGSM. Residues 268–288 form a helical membrane-spanning segment; the sequence is FYCVQIIVSHSYATISPFVFI. The Cytoplasmic portion of the chain corresponds to 289-308; sequence CTEKHMTKILRSVCTRIINI.

The protein belongs to the G-protein coupled receptor 1 family.

The protein resides in the cell membrane. Putative pheromone receptor implicated in the regulation of social as well as reproductive behavior. The sequence is that of Vomeronasal type-1 receptor 92 (Vom1r92) from Rattus norvegicus (Rat).